Here is a 492-residue protein sequence, read N- to C-terminus: Probable malate:quinone oxidoreductase 1 (492 aa).

It belongs to the MQO family. The cofactor is FAD.

The catalysed reaction is (S)-malate + a quinone = a quinol + oxaloacetate. It participates in carbohydrate metabolism; tricarboxylic acid cycle; oxaloacetate from (S)-malate (quinone route): step 1/1. This is Probable malate:quinone oxidoreductase 1 from Staphylococcus epidermidis (strain ATCC 12228 / FDA PCI 1200).